The sequence spans 796 residues: Peroxisome proliferator-activated receptor gamma coactivator 1-alpha (796 aa).

Residue lysine 77 is modified to N6-acetyllysine. Residues 98–138 form a disordered region; that stretch reads PVDEDGLPSFDALTDGDVTTENEASPSSMPDGTPPPQEAEE. Polar residues predominate over residues 114–127; the sequence is DVTTENEASPSSMP. An LXXLL motif motif is present at residues 142–146; the sequence is LKKLL. Lysine 144 carries the post-translational modification N6-acetyllysine. Residue threonine 176 is modified to Phosphothreonine; by AMPK. N6-acetyllysine is present on lysine 182. The tract at residues 211-274 is disordered; that stretch reads YLTTNDDPPH…PNDPKGSPFE (64 aa). Residues 217-235 are compositionally biased toward basic and acidic residues; sequence DPPHTKPTETRNSSRDKCT. A compositionally biased stretch (polar residues) spans 242 to 258; that stretch reads TQSQSQHLQAKPTSLSL. 4 positions are modified to N6-acetyllysine: lysine 252, lysine 269, lysine 276, and lysine 319. The segment at 288 to 349 is disordered; the sequence is GTAGLTPPTT…NNSTKKGPEQ (62 aa). An interaction with PPARG region spans residues 291 to 337; the sequence is GLTPPTTPPHKANQDNPFRASPKLKPPCKTVVPPPSKKTRYSESSGT. Polar residues predominate over residues 332-344; sequence SESSGTHGNNSTK. Lysine 345, lysine 411, and lysine 449 each carry N6-acetyllysine. The interval 348–796 is mediates interaction with RNF34; sequence EQSELYAQLS…LKEAQRSLRR (449 aa). The interval 463–487 is disordered; it reads HFGHPSQAVFDDEADKTSELRDSDF. The span at 477-486 shows a compositional bias: basic and acidic residues; the sequence is DKTSELRDSD. A Phosphoserine; by AMPK modification is found at serine 537. Disordered regions lie at residues 541–637 and 648–667; these read FNSP…SYEE and YRRE…ERQR. Residues 568–603 show a composition bias toward low complexity; it reads RSFSQHRSCSRSPYSRSRSRSPGSRSSSRSCYYSES. Basic residues predominate over residues 620–629; it reads SRSRSPYSRR. The 77-residue stretch at 675 to 751 folds into the RRM domain; it reads RVIYVGKIRP…TDFELYFCGR (77 aa). An N6-acetyllysine mark is found at lysine 756 and lysine 777.

As to quaternary structure, homooligomer. Interacts with MYBBP1A; inhibits MYBBP1A transcriptional activation. Interacts with PRDM16, LPIN1 and PML. Interacts (via LXXLL motif) with RORA and RORC (via AF-2 motif); activates RORA and RORC transcriptional activation. Interacts with LRPPRC. Interacts with FOXO1. Interacts with NR5A2. Post-translationally, phosphorylation by AMPK in skeletal muscle increases activation of its own promoter. Phosphorylated by CLK2. In terms of processing, heavily acetylated by KAT2A/GCN5 under conditions of high nutrients, leading to inactivation of PPARGC1A. Deacetylated by SIRT1 in low nutrients/high NAD conditions, leading to its activation. Ubiquitinated. Ubiquitination by RNF34 induces proteasomal degradation.

The protein localises to the nucleus. The protein resides in the PML body. In terms of biological role, transcriptional coactivator for steroid receptors and nuclear receptors. Greatly increases the transcriptional activity of PPARG and thyroid hormone receptor on the uncoupling protein promoter. Can regulate key mitochondrial genes that contribute to the program of adaptive thermogenesis. Plays an essential role in metabolic reprogramming in response to dietary availability through coordination of the expression of a wide array of genes involved in glucose and fatty acid metabolism. Acts as a key regulator of gluconeogenesis: stimulates hepatic gluconeogenesis by increasing the expression of gluconeogenic enzymes, and acting together with FOXO1 to promote the fasting gluconeogenic program. Induces the expression of PERM1 in the skeletal muscle in an ESRRA-dependent manner. Also involved in the integration of the circadian rhythms and energy metabolism. Required for oscillatory expression of clock genes, such as BMAL1 and NR1D1, through the coactivation of RORA and RORC, and metabolic genes, such as PDK4 and PEPCK. The chain is Peroxisome proliferator-activated receptor gamma coactivator 1-alpha (PPARGC1A) from Sus scrofa (Pig).